A 393-amino-acid chain; its full sequence is NADH-quinone oxidoreductase subunit D 2 (393 aa).

Belongs to the complex I 49 kDa subunit family. In terms of assembly, NDH-1 is composed of 14 different subunits. Subunits NuoB, C, D, E, F, and G constitute the peripheral sector of the complex.

It localises to the cell inner membrane. It catalyses the reaction a quinone + NADH + 5 H(+)(in) = a quinol + NAD(+) + 4 H(+)(out). In terms of biological role, NDH-1 shuttles electrons from NADH, via FMN and iron-sulfur (Fe-S) centers, to quinones in the respiratory chain. The immediate electron acceptor for the enzyme in this species is believed to be a menaquinone. Couples the redox reaction to proton translocation (for every two electrons transferred, four hydrogen ions are translocated across the cytoplasmic membrane), and thus conserves the redox energy in a proton gradient. The chain is NADH-quinone oxidoreductase subunit D 2 from Cytophaga hutchinsonii (strain ATCC 33406 / DSM 1761 / CIP 103989 / NBRC 15051 / NCIMB 9469 / D465).